We begin with the raw amino-acid sequence, 133 residues long: Putative esterase STK_17900 (133 aa).

It belongs to the thioesterase PaaI family.

This Sulfurisphaera tokodaii (strain DSM 16993 / JCM 10545 / NBRC 100140 / 7) (Sulfolobus tokodaii) protein is Putative esterase STK_17900.